Consider the following 269-residue polypeptide: Glutamate racemase (269 aa).

Residues 7-8 (DS) and 39-40 (YG) each bind substrate. Cys-70 serves as the catalytic Proton donor/acceptor. Residue 71–72 (NT) coordinates substrate. Catalysis depends on Cys-194, which acts as the Proton donor/acceptor. Residue 195–196 (TH) coordinates substrate.

The protein belongs to the aspartate/glutamate racemases family.

The enzyme catalyses L-glutamate = D-glutamate. It participates in cell wall biogenesis; peptidoglycan biosynthesis. Its function is as follows. Provides the (R)-glutamate required for cell wall biosynthesis. This chain is Glutamate racemase, found in Ruegeria pomeroyi (strain ATCC 700808 / DSM 15171 / DSS-3) (Silicibacter pomeroyi).